A 726-amino-acid polypeptide reads, in one-letter code: F-box protein COS111 (726 aa).

The 52-residue stretch at 143 to 194 folds into the F-box domain; that stretch reads FADINCLPEEIICRIIANLNDADSQRNCLLVSQEWSECAKRIIYKDVKFTST. Residues 276–295 are disordered; the sequence is RSRTRRSSDASSMNSSVFSH. Residues 284–295 show a composition bias toward low complexity; it reads DASSMNSSVFSH.

In terms of biological role, F-box protein probably involved in ubiquitin conjugation pathway. This is F-box protein COS111 (COS111) from Kluyveromyces lactis (strain ATCC 8585 / CBS 2359 / DSM 70799 / NBRC 1267 / NRRL Y-1140 / WM37) (Yeast).